Reading from the N-terminus, the 184-residue chain is Protein DP71L (184 aa).

A compositionally biased stretch (basic residues) spans 1–15; that stretch reads MSRRNKRSRRRRKKP. The tract at residues 1-41 is disordered; sequence MSRRNKRSRRRRKKPLNTIQPGPSKPSAQDEPIKSVSHHSS. Important for host CHOP inhibition regions lie at residues 125-127 and 169-173; these read VYF and LSAVL.

Belongs to the asfivirus DP71L family. As to quaternary structure, interacts (via C-terminus) with host PPP1CB.

Functionally, interacts with the host phosphatase PP1 catalytic subunit (PPP1CB) and recruits it to dephosphorylate EIF2S1/eIF2alpha and therefore restores the host translation that has been shut-down by the host. Also inhibits the EIF2S1/eIF2alpha-ATF4-DDIT3/CHOP pathway. The sequence is that of Protein DP71L from Ornithodoros (relapsing fever ticks).